We begin with the raw amino-acid sequence, 145 residues long: MSMVSEFKKFALKGNVMDLAVGVIIGGAFATITKSLVEDVIMPIVAFIAGGEINFKNMFLILGDTPEGVVMTYDALKAAGVPVLAYGNFITVLINFLILAFIIFMMVKMVNRLRRADEVVEKIAGPSEEVQLLREISAKLGNINK.

Helical transmembrane passes span 10-30 (FALK…GAFA), 41-61 (IMPI…MFLI), and 87-107 (GNFI…FMMV).

This sequence belongs to the MscL family. Homopentamer.

The protein localises to the cell inner membrane. Functionally, channel that opens in response to stretch forces in the membrane lipid bilayer. May participate in the regulation of osmotic pressure changes within the cell. This chain is Large-conductance mechanosensitive channel, found in Psychrobacter arcticus (strain DSM 17307 / VKM B-2377 / 273-4).